We begin with the raw amino-acid sequence, 263 residues long: MEESEYESVLCVKPEVHVYRIPPRATNRGYRASEWQLDQPSWSGRLRITAKGKVAYIKLEDRTSGELFAQAPVDQFPGTAVESVTDSSRYFVIRIEDGNGRRAFIGIGFGDRGDAFDFNVALQDHFKWVKQQCEFAKQAQNPDEGPKLDLGFKEGQTIKINIANMRKKEGAAGAPRTRPASAGGLSLLPPPPGGKMSTLIPPSGEQFSGGSLVQPVSGSGGATELWPQSKPAAAATADIWGDFTKSTGSPSSQSQPGTGWVQF.

2 disordered regions span residues 167–191 (KKEG…LPPP) and 209–263 (GGSL…WVQF). S181 is modified (phosphoserine). 2 short sequence motifs (WXXF motif) span residues 218–221 (GSGG) and 238–241 (DIWG). Over residues 246–263 (STGSPSSQSQPGTGWVQF) the composition is skewed to low complexity.

The protein belongs to the NECAP family. Interacts with AP1G1 and AP2A1 components of the adapter protein complexes AP-1 and AP-2. Interacts with the GAE domain proteins GGA1, GGA2 and GGA3. As to expression, expressed in brain, heart, kidney, liver and lung (at protein level).

Its subcellular location is the cytoplasmic vesicle. The protein resides in the clathrin-coated vesicle membrane. It is found in the cell membrane. Its function is as follows. Involved in endocytosis. The chain is Adaptin ear-binding coat-associated protein 2 (Necap2) from Rattus norvegicus (Rat).